Consider the following 445-residue polypeptide: E3 ubiquitin-protein ligase MYLIP (445 aa).

In terms of domain architecture, FERM spans 1 to 279 (MLCYVTRPDA…ETHAFYRCDT (279 aa)). Residues 341 to 363 (RNDQSPPSSPLKSSDSSMSCSSC) are disordered. The segment covering 350–363 (PLKSSDSSMSCSSC) has biased composition (low complexity). Fe cation is bound by residues cysteine 360, cysteine 363, and cysteine 368. Residues 387–422 (CMVCCEEEINSTFCPCGHTVCCESCAAQLQSCPVCR) form an RING-type zinc finger. The segment at 431–433 (VYL) is critical for homodimerization.

In terms of assembly, homodimer. Interacts with the E2 ubiquitin-conjugating enzyme, UBE2D1 (via RING-type zinc finger). Interacts with myosin regulatory light chain (MRLC) and TMEM4. In terms of processing, autoubiquitinated. In terms of tissue distribution, expressed in developing and adult brain, hippocampus, cerebellum, cerebral cortex, thalamus and substantia nigra. Predominantly found in neurons.

The protein resides in the cytoplasm. It is found in the cell membrane. It catalyses the reaction S-ubiquitinyl-[E2 ubiquitin-conjugating enzyme]-L-cysteine + [acceptor protein]-L-lysine = [E2 ubiquitin-conjugating enzyme]-L-cysteine + N(6)-ubiquitinyl-[acceptor protein]-L-lysine.. It participates in protein modification; protein ubiquitination. Its activity is regulated as follows. Can bind 1 iron ion per dimer. Iron binding seems to decrease LDLR degradation activity. Functionally, E3 ubiquitin-protein ligase that mediates ubiquitination and subsequent proteasomal degradation of myosin regulatory light chain (MRLC), LDLR, VLDLR and LRP8. Activity depends on E2 enzymes of the UBE2D family. Proteasomal degradation of MRLC leads to inhibit neurite outgrowth in presence of NGF by counteracting the stabilization of MRLC by saposin-like protein (CNPY2/MSAP) and reducing CNPY2-stimulated neurite outgrowth. Acts as a sterol-dependent inhibitor of cellular cholesterol uptake by mediating ubiquitination and subsequent degradation of LDLR. In Rattus norvegicus (Rat), this protein is E3 ubiquitin-protein ligase MYLIP (Mylip).